The chain runs to 574 residues: Adenine deaminase (574 aa).

The protein belongs to the metallo-dependent hydrolases superfamily. Adenine deaminase family. Mn(2+) serves as cofactor.

It carries out the reaction adenine + H2O + H(+) = hypoxanthine + NH4(+). The chain is Adenine deaminase from Thermosipho melanesiensis (strain DSM 12029 / CIP 104789 / BI429).